The chain runs to 66 residues: Conotoxin PnMLCL-01 (66 aa).

The N-terminal stretch at 1–19 is a signal peptide; it reads MLCLPVFIILLLLASPAAS. Residues 20–45 constitute a propeptide that is removed on maturation; it reads NPLEKRIQSDLIRAALEDADTKNDPR. C63 is subject to Cysteine amide.

Belongs to the conotoxin T superfamily. Contains 2 disulfide bonds that can be either 'C1-C3, C2-C4' or 'C1-C4, C2-C3', since these disulfide connectivities have been observed for conotoxins with cysteine framework V (for examples, see AC P0DQQ7 and AC P81755). Expressed by the venom duct.

Its subcellular location is the secreted. This Conus pennaceus (Feathered cone) protein is Conotoxin PnMLCL-01.